We begin with the raw amino-acid sequence, 472 residues long: 3-isopropylmalate dehydratase large subunit (472 aa).

3 residues coordinate [4Fe-4S] cluster: Cys350, Cys411, and Cys414.

The protein belongs to the aconitase/IPM isomerase family. LeuC type 1 subfamily. In terms of assembly, heterodimer of LeuC and LeuD. The cofactor is [4Fe-4S] cluster.

It carries out the reaction (2R,3S)-3-isopropylmalate = (2S)-2-isopropylmalate. The protein operates within amino-acid biosynthesis; L-leucine biosynthesis; L-leucine from 3-methyl-2-oxobutanoate: step 2/4. Functionally, catalyzes the isomerization between 2-isopropylmalate and 3-isopropylmalate, via the formation of 2-isopropylmaleate. This chain is 3-isopropylmalate dehydratase large subunit, found in Alcanivorax borkumensis (strain ATCC 700651 / DSM 11573 / NCIMB 13689 / SK2).